Here is a 590-residue protein sequence, read N- to C-terminus: Protein OS-9 homolog (590 aa).

The N-terminal stretch at 1–19 (MRRPSLALLALSSLPFGSA) is a signal peptide. Residues 83–106 (SAIRESATANADTDNGDESIGGTS) are disordered. Asparagine 136 is a glycosylation site (N-linked (GlcNAc...) asparagine). The MRH domain maps to 167–312 (NQCLHFVSGW…VIHTPRLCAD (146 aa)). Cysteine 169 and cysteine 182 are joined by a disulfide. A mannooligosaccharide derivative is bound by residues tryptophan 176, tryptophan 177, and glutamine 189. Residues 198-248 (GGPPLRDKNSQEYILGTSLPPSSHSQKGKQIEVPNNEQKQLSPPPNTELQA) form a disordered region. 2 disulfides stabilise this stretch: cysteine 265/cysteine 298 and cysteine 280/cysteine 310. A mannooligosaccharide derivative is bound by residues aspartate 266, arginine 272, glutamate 294, and tyrosine 300. 3 disordered regions span residues 357 to 376 (AAVT…PEKL), 436 to 472 (GDDN…MKKM), and 545 to 590 (YEDE…RDEL). Residues 446–455 (HHPKAGKGRK) show a composition bias toward basic residues. Basic and acidic residues-rich tracts occupy residues 556–568 (EAGK…KKGG) and 579–590 (EGSKEEYYRDEL). The Prevents secretion from ER motif lies at 587-590 (RDEL).

It belongs to the OS-9 family. In terms of assembly, interacts with missfolded ER lumenal proteins.

The protein localises to the endoplasmic reticulum membrane. Its function is as follows. Lectin involved in the quality control of the secretory pathway. As a member of the endoplasmic reticulum-associated degradation lumenal (ERAD-L) surveillance system, targets misfolded endoplasmic reticulum lumenal glycoproteins for degradation. The polypeptide is Protein OS-9 homolog (yos-9) (Neurospora crassa (strain ATCC 24698 / 74-OR23-1A / CBS 708.71 / DSM 1257 / FGSC 987)).